The following is a 214-amino-acid chain: MSGLFITFEGGEGAGKSTQIALLASHLRNHGFDPVITREPGGSPGAEAIRHVILSGNAETYGPAMEALLFAAARADHVDQLIRPALAEGRIVLCDRFIDSGRAYQGVTGNLDATYMAAIERIAIDGAMPDLTLVLDICAERGLSRAGKRRGSDTADRFEKEDIAVHEARRQAFLEIARQEPARCKVIDADRSQEKIADEIRSVVDTILTEKGLL.

10–17 (GGEGAGKS) lines the ATP pocket.

Belongs to the thymidylate kinase family.

The catalysed reaction is dTMP + ATP = dTDP + ADP. Phosphorylation of dTMP to form dTDP in both de novo and salvage pathways of dTTP synthesis. The protein is Thymidylate kinase of Brucella canis (strain ATCC 23365 / NCTC 10854 / RM-666).